A 634-amino-acid polypeptide reads, in one-letter code: BTB/POZ domain-containing protein At1g03010 (634 aa).

The region spanning 38-103 (SDLTVQVGSS…CYGINIEINL (66 aa)) is the BTB domain. The region spanning 205–503 (DWWGKSLAVL…VQVLYFEQIR (299 aa)) is the NPH3 domain. Tyr-444 bears the Phosphotyrosine mark. Residues 542–580 (RDNYASVRRENRELKLEVARMRMRLTDLEKDHISIKQEL) are a coiled coil.

The protein belongs to the NPH3 family.

Its pathway is protein modification; protein ubiquitination. Functionally, may act as a substrate-specific adapter of an E3 ubiquitin-protein ligase complex (CUL3-RBX1-BTB) which mediates the ubiquitination and subsequent proteasomal degradation of target proteins. This chain is BTB/POZ domain-containing protein At1g03010, found in Arabidopsis thaliana (Mouse-ear cress).